A 148-amino-acid chain; its full sequence is Holo-[acyl-carrier-protein] synthase (148 aa).

The Mg(2+) site is built by D9 and E63.

The protein belongs to the P-Pant transferase superfamily. AcpS family. Requires Mg(2+) as cofactor.

Its subcellular location is the cytoplasm. The enzyme catalyses apo-[ACP] + CoA = holo-[ACP] + adenosine 3',5'-bisphosphate + H(+). In terms of biological role, transfers the 4'-phosphopantetheine moiety from coenzyme A to a Ser of acyl-carrier-protein. The chain is Holo-[acyl-carrier-protein] synthase from Burkholderia cenocepacia (strain HI2424).